We begin with the raw amino-acid sequence, 287 residues long: POU domain class 2-associating factor 2 (287 aa).

The OCA domain occupies 10–32 (KRVYQGVRVKHTVKDLLAEKRSR). 3 disordered regions span residues 24 to 51 (DLLAEKRSRQTSNTRLNGSVSSSQPPFI), 161 to 199 (TVPDGLSQPDPMPADALQSLPPSTSCLSQLESGSSTQHR), and 247 to 279 (PKVGPLSPEEGSDVSSLHDPSPWTKEDGSMAWG). 2 stretches are compositionally biased toward polar residues: residues 33–49 (QTSNTRLNGSVSSSQPP) and 180–199 (LPPSTSCLSQLESGSSTQHR).

Belongs to the POU2AF family. Interacts with POU2F3 (via the POU domain) in a DNA-dependent manner; this interaction recruits POU2AF2 to chromatin and increases POU2F3 transactivation activity. Expressed in tuft cells of the small intestine, trachea, thymus, and colon.

The protein localises to the cytoplasm. The protein resides in the cytosol. It is found in the nucleus. In terms of biological role, transcriptional coactivator of POU2F3. This complex drives the development of tuft cells, a rare chemosensory cells that coordinate immune and neural functions within mucosal epithelial tissues. The polypeptide is POU domain class 2-associating factor 2 (Mus musculus (Mouse)).